A 118-amino-acid polypeptide reads, in one-letter code: C-type natriuretic peptide 2 (118 aa).

An N-terminal signal peptide occupies residues 1 to 22 (MHFCHIVGWGLVLAVLYLRTEA). A propeptide spanning residues 23 to 96 (KPVAQAHQKS…SRKIKGINKK (74 aa)) is cleaved from the precursor. Cys-102 and Cys-118 are disulfide-bonded.

It belongs to the natriuretic peptide family.

It is found in the secreted. In terms of biological role, exhibits natriuretic and vasodepressor activity. Has a cGMP-stimulating activity. The protein is C-type natriuretic peptide 2 of Aquarana catesbeiana (American bullfrog).